The sequence spans 173 residues: Small ribosomal subunit protein mS25 (173 aa).

Belongs to the mitochondrion-specific ribosomal protein mS25 family. In terms of assembly, component of the mitochondrial ribosome small subunit (28S) which comprises a 12S rRNA and about 30 distinct proteins.

Its subcellular location is the mitochondrion. This is Small ribosomal subunit protein mS25 (MRPS25) from Bos taurus (Bovine).